We begin with the raw amino-acid sequence, 367 residues long: Glutamate 5-kinase (367 aa).

Lys17 serves as a coordination point for ATP. Substrate is bound by residues Ser57, Asp144, and Asn156. ATP-binding positions include 176–177 (SD) and 217–223 (TGGMTSK). The region spanning 279–357 (AGALTLDEGA…SELPGELRRP (79 aa)) is the PUA domain.

It belongs to the glutamate 5-kinase family.

It localises to the cytoplasm. The catalysed reaction is L-glutamate + ATP = L-glutamyl 5-phosphate + ADP. The protein operates within amino-acid biosynthesis; L-proline biosynthesis; L-glutamate 5-semialdehyde from L-glutamate: step 1/2. In terms of biological role, catalyzes the transfer of a phosphate group to glutamate to form L-glutamate 5-phosphate. The protein is Glutamate 5-kinase of Mycobacterium avium (strain 104).